Consider the following 546-residue polypeptide: Chaperonin GroEL (546 aa).

Residues 30-33 (TLGP), K51, 87-91 (DGTTT), G415, 479-481 (NAA), and D495 each bind ATP. Residues 526 to 546 (KEEKPDLSGAGAGMGGMGGMM) form a disordered region. Residues 535–546 (AGAGMGGMGGMM) show a composition bias toward gly residues.

This sequence belongs to the chaperonin (HSP60) family. In terms of assembly, forms a cylinder of 14 subunits composed of two heptameric rings stacked back-to-back. Interacts with the co-chaperonin GroES.

The protein resides in the cytoplasm. It catalyses the reaction ATP + H2O + a folded polypeptide = ADP + phosphate + an unfolded polypeptide.. Together with its co-chaperonin GroES, plays an essential role in assisting protein folding. The GroEL-GroES system forms a nano-cage that allows encapsulation of the non-native substrate proteins and provides a physical environment optimized to promote and accelerate protein folding. This Wigglesworthia glossinidia brevipalpis protein is Chaperonin GroEL.